A 111-amino-acid polypeptide reads, in one-letter code: Probable monothiol glutaredoxin 2 (111 aa).

One can recognise a Glutaredoxin domain in the interval 7–109 (LKFIQNAIKK…KMLKDETKLI (103 aa)). Glutathione is bound at residue Lys24. Cys32 provides a ligand contact to [2Fe-2S] cluster. Glutathione contacts are provided by residues Arg61, Phe73, and 86–87 (CD).

This sequence belongs to the glutaredoxin family. Monothiol subfamily.

This Rickettsia typhi (strain ATCC VR-144 / Wilmington) protein is Probable monothiol glutaredoxin 2 (grxC2).